Here is a 352-residue protein sequence, read N- to C-terminus: DNA polymerase IV (352 aa).

The UmuC domain maps to 6-186; that stretch reads IIHIDMDAFY…LPLGKIPGVG (181 aa). Mg(2+)-binding residues include aspartate 10 and aspartate 104. The active site involves glutamate 105.

This sequence belongs to the DNA polymerase type-Y family. As to quaternary structure, monomer. The cofactor is Mg(2+).

Its subcellular location is the cytoplasm. It carries out the reaction DNA(n) + a 2'-deoxyribonucleoside 5'-triphosphate = DNA(n+1) + diphosphate. Its function is as follows. Poorly processive, error-prone DNA polymerase involved in untargeted mutagenesis. Copies undamaged DNA at stalled replication forks, which arise in vivo from mismatched or misaligned primer ends. These misaligned primers can be extended by PolIV. Exhibits no 3'-5' exonuclease (proofreading) activity. May be involved in translesional synthesis, in conjunction with the beta clamp from PolIII. This chain is DNA polymerase IV, found in Neisseria meningitidis serogroup A / serotype 4A (strain DSM 15465 / Z2491).